The following is an 81-amino-acid chain: Putative chemokine-related protein B42 (81 aa).

3 disulfide bridges follow: cysteine 7-cysteine 73, cysteine 8-cysteine 29, and cysteine 11-cysteine 45.

As to expression, expressed in placenta, heart, lung, liver, pancreas, skeletal muscle and brain.

Its subcellular location is the cytoplasm. This Homo sapiens (Human) protein is Putative chemokine-related protein B42.